Consider the following 639-residue polypeptide: Pheromone B alpha 1 receptor (639 aa).

The next 7 membrane-spanning stretches (helical) occupy residues Leu8–Leu28, Phe37–Ala57, Ile70–Ile90, Ile113–Ile133, Val163–Phe183, Met209–Leu229, and Leu272–Glu292. Disordered regions lie at residues Pro375–Ile416, Thr490–Ala516, Ser532–Ser563, and Thr611–Val639. Positions Ser383–Ser398 are enriched in low complexity. Low complexity-rich tracts occupy residues Gly541–Ser551 and Thr611–Pro621.

This sequence belongs to the G-protein coupled receptor 4 family.

The protein localises to the membrane. In terms of biological role, receptor for the BAP1 pheromone, a prenylated mating factor. Has a role in the initiation of B-regulated nuclear migration. The sequence is that of Pheromone B alpha 1 receptor (BAR1) from Schizophyllum commune (Split gill fungus).